The primary structure comprises 412 residues: Divalent metal cation transporter MntH (412 aa).

Residues 1 to 19 (MTNYRVESSSGRAARKMRL) lie on the Cytoplasmic side of the membrane. The chain crosses the membrane as a helical span at residues 20-39 (ALMGPAFIAAIGYIDPGNFA). Topologically, residues 40–51 (TNIQAGASFGYQ) are periplasmic. The helical transmembrane segment at 52–71 (LLWVVVWANLMAMLIQILSA) threads the bilayer. Over 72–95 (KLGIATGKNLAEQIRDHYPRPVVW) the chain is Cytoplasmic. Residues 96–118 (FYWVQAEIIAMATDLAEFIGAAI) traverse the membrane as a helical segment. Residues 119–125 (GFKLILG) lie on the Periplasmic side of the membrane. A helical membrane pass occupies residues 126-145 (VSLLQGAVLTGIATFLILML). Residues 146–155 (QRRGQKPLEK) lie on the Cytoplasmic side of the membrane. Residues 156-175 (VIGGLLLFVAAAYIVELIFS) form a helical membrane-spanning segment. Residues 176–196 (QPNLAQLGKGMVIPSLPTSEA) are Periplasmic-facing. The helical transmembrane segment at 197 to 220 (VFLAAGVLGATIMPHVIYLHSSLT) threads the bilayer. The Cytoplasmic portion of the chain corresponds to 221-238 (QHLHGGSRQQRYSATKWD). Residues 239 to 258 (VAIAMTIAGFVNLVMMATAA) form a helical membrane-spanning segment. Residues 259 to 276 (AAFHFSGHTGVADLDEAY) are Periplasmic-facing. The helical transmembrane segment at 277 to 297 (LTLQPLLSHAAATVFGLSLVA) threads the bilayer. Residues 298–327 (AGLSSTVVGTLAGQVVMQGFIRFHIPLWVR) are Cytoplasmic-facing. Residues 328 to 344 (RTVTMLPSFIVILMGLD) traverse the membrane as a helical segment. At 345–350 (PTRILV) the chain is on the periplasmic side. Residues 351–370 (MSQVLLSFGIALALVPLLIF) form a helical membrane-spanning segment. At 371–387 (TSDSKLMGDLVNSKRVK) the chain is on the cytoplasmic side. Residues 388 to 406 (QTGWVIVVLVVALNIWLLV) traverse the membrane as a helical segment. At 407 to 412 (GTALGL) the chain is on the periplasmic side.

Belongs to the NRAMP family.

The protein resides in the cell inner membrane. In terms of biological role, h(+)-stimulated, divalent metal cation uptake system. The sequence is that of Divalent metal cation transporter MntH from Shigella flexneri serotype 5b (strain 8401).